The primary structure comprises 345 residues: Thylakoid lumenal 29 kDa protein, chloroplastic (345 aa).

Belongs to the peroxidase family.

Its subcellular location is the plastid. It localises to the chloroplast thylakoid lumen. The chain is Thylakoid lumenal 29 kDa protein, chloroplastic (CLEB3J9) from Solanum lycopersicum (Tomato).